Consider the following 452-residue polypeptide: Phosphoglucosamine mutase (452 aa).

Serine 98 acts as the Phosphoserine intermediate in catalysis. Mg(2+) contacts are provided by serine 98, aspartate 239, aspartate 241, and aspartate 243. Phosphoserine is present on serine 98.

The protein belongs to the phosphohexose mutase family. Mg(2+) serves as cofactor. In terms of processing, activated by phosphorylation.

It catalyses the reaction alpha-D-glucosamine 1-phosphate = D-glucosamine 6-phosphate. Its function is as follows. Catalyzes the conversion of glucosamine-6-phosphate to glucosamine-1-phosphate. The polypeptide is Phosphoglucosamine mutase (Anaplasma marginale (strain St. Maries)).